Consider the following 1081-residue polypeptide: Carbamoyl phosphate synthase large chain (1081 aa).

The interval 1–403 is carboxyphosphate synthetic domain; that stretch reads MPRRNDLNKI…SFQKALRSLE (403 aa). The ATP site is built by arginine 129, arginine 170, glycine 177, lysine 209, leucine 211, glutamate 216, glycine 242, valine 243, histidine 244, glutamine 286, and glutamate 300. The 197-residue stretch at 133–329 folds into the ATP-grasp 1 domain; the sequence is KEAMARIGVP…IAKFAAKLAV (197 aa). 3 residues coordinate Mg(2+): glutamine 286, glutamate 300, and asparagine 302. Mn(2+) contacts are provided by glutamine 286, glutamate 300, and asparagine 302. The segment at 404–553 is oligomerization domain; the sequence is TGRFGFGCDR…STYEPEECEV (150 aa). The interval 554–944 is carbamoyl phosphate synthetic domain; sequence LPSDKPKVMI…AFAKAELGAG (391 aa). In terms of domain architecture, ATP-grasp 2 spans 686–878; that stretch reads EKILHELEIS…LAKIASLVMS (193 aa). Positions 722, 761, 763, 768, 794, 795, 796, 797, 837, and 849 each coordinate ATP. Positions 837, 849, and 851 each coordinate Mg(2+). Residues glutamine 837, glutamate 849, and asparagine 851 each contribute to the Mn(2+) site. In terms of domain architecture, MGS-like spans 945 to 1081; it reads VILATTGTVF…DVKALQDYLG (137 aa). The tract at residues 945–1081 is allosteric domain; it reads VILATTGTVF…DVKALQDYLG (137 aa).

Belongs to the CarB family. In terms of assembly, composed of two chains; the small (or glutamine) chain promotes the hydrolysis of glutamine to ammonia, which is used by the large (or ammonia) chain to synthesize carbamoyl phosphate. Tetramer of heterodimers (alpha,beta)4. The cofactor is Mg(2+). Mn(2+) serves as cofactor.

It carries out the reaction hydrogencarbonate + L-glutamine + 2 ATP + H2O = carbamoyl phosphate + L-glutamate + 2 ADP + phosphate + 2 H(+). It catalyses the reaction hydrogencarbonate + NH4(+) + 2 ATP = carbamoyl phosphate + 2 ADP + phosphate + 2 H(+). The protein operates within amino-acid biosynthesis; L-arginine biosynthesis; carbamoyl phosphate from bicarbonate: step 1/1. Its pathway is pyrimidine metabolism; UMP biosynthesis via de novo pathway; (S)-dihydroorotate from bicarbonate: step 1/3. Large subunit of the glutamine-dependent carbamoyl phosphate synthetase (CPSase). CPSase catalyzes the formation of carbamoyl phosphate from the ammonia moiety of glutamine, carbonate, and phosphate donated by ATP, constituting the first step of 2 biosynthetic pathways, one leading to arginine and/or urea and the other to pyrimidine nucleotides. The large subunit (synthetase) binds the substrates ammonia (free or transferred from glutamine from the small subunit), hydrogencarbonate and ATP and carries out an ATP-coupled ligase reaction, activating hydrogencarbonate by forming carboxy phosphate which reacts with ammonia to form carbamoyl phosphate. The polypeptide is Carbamoyl phosphate synthase large chain (Synechocystis sp. (strain ATCC 27184 / PCC 6803 / Kazusa)).